The primary structure comprises 147 residues: Mineralocorticoid receptor (147 aa).

Residues 1–147 enclose the NR LBD domain; the sequence is FALSWRSYKH…SQALKVEFPA (147 aa). 2 residues coordinate 21-hydroxyprogesterone: Arg6 and Thr134. Aldosterone-binding residues include Arg6 and Thr134. Residues Arg6 and Thr134 each contribute to the progesterone site.

It belongs to the nuclear hormone receptor family. NR3 subfamily.

It localises to the cytoplasm. The protein localises to the nucleus. Functionally, receptor for both mineralocorticoids (MC) such as aldosterone and glucocorticoids (GC) such as corticosterone or cortisol. Binds to mineralocorticoid response elements (MRE) and transactivates target genes. The effect of MC is to increase ion and water transport and thus raise extracellular fluid volume and blood pressure and lower potassium levels. In Gallus gallus (Chicken), this protein is Mineralocorticoid receptor (NR3C2).